Reading from the N-terminus, the 425-residue chain is Serine--tRNA ligase (425 aa).

230–232 (TAE) lines the L-serine pocket. An ATP-binding site is contributed by 261 to 263 (RSE). Residue Glu-284 participates in L-serine binding. 348–351 (EISS) contacts ATP. Residue Ser-384 participates in L-serine binding.

Belongs to the class-II aminoacyl-tRNA synthetase family. Type-1 seryl-tRNA synthetase subfamily. In terms of assembly, homodimer. The tRNA molecule binds across the dimer.

It localises to the cytoplasm. The catalysed reaction is tRNA(Ser) + L-serine + ATP = L-seryl-tRNA(Ser) + AMP + diphosphate + H(+). The enzyme catalyses tRNA(Sec) + L-serine + ATP = L-seryl-tRNA(Sec) + AMP + diphosphate + H(+). The protein operates within aminoacyl-tRNA biosynthesis; selenocysteinyl-tRNA(Sec) biosynthesis; L-seryl-tRNA(Sec) from L-serine and tRNA(Sec): step 1/1. In terms of biological role, catalyzes the attachment of serine to tRNA(Ser). Is also able to aminoacylate tRNA(Sec) with serine, to form the misacylated tRNA L-seryl-tRNA(Sec), which will be further converted into selenocysteinyl-tRNA(Sec). In Streptococcus thermophilus (strain ATCC BAA-491 / LMD-9), this protein is Serine--tRNA ligase.